The following is a 427-amino-acid chain: Zinc finger protein DPF3 (427 aa).

The disordered stretch occupies residues 182-244; sequence LENDENADEV…NDAASQDDHD (63 aa). Residues 184–199 are compositionally biased toward acidic residues; that stretch reads NDENADEVNEEEDLEE. The segment covering 233–244 has biased composition (basic and acidic residues); it reads RRNDAASQDDHD. The segment at 247-270 adopts a C2H2-type zinc-finger fold; it reads YVCDICGKRYKNRPGLSYHYAHTH. The tract at residues 272-301 is disordered; sequence ASEEGDEAREQETRSSPVHRNENHKPQKGP. Positions 279–296 are enriched in basic and acidic residues; the sequence is AREQETRSSPVHRNENHK. 2 consecutive PHD-type zinc fingers follow at residues 308–368 and 365–415; these read NNYC…CKSC and CKSC…CREL.

It belongs to the requiem/DPF family. Component of the BAF complex. Interacts with acetylated histones H3 and H4. Component of neuron-specific chromatin remodeling complex (nBAF complex), a subfamily of ATP-dependent SWI/SNF chromatin remodeling complexes. As to expression, expressed in the heart and somites.

The protein resides in the nucleus. Muscle-specific component of the BAF complex, a multiprotein complex involved in transcriptional activation and repression of select genes by chromatin remodeling (alteration of DNA-nucleosome topology). Specifically binds acetylated lysines on histone 3 and 4. In the complex, it acts as a tissue-specific anchor between histone acetylations and methylations and chromatin remodeling. It thereby probably plays an essential role in heart and skeletal muscle development. Belongs to the neuron-specific chromatin remodeling complex (nBAF complex) and plays a role in neural development. The sequence is that of Zinc finger protein DPF3 (DPF3) from Gallus gallus (Chicken).